The following is a 305-amino-acid chain: tRNA uridine(34) hydroxylase (305 aa).

One can recognise a Rhodanese domain in the interval 125 to 219 (ADENTVVVDT…YLEEVPREQS (95 aa)). Cysteine 179 acts as the Cysteine persulfide intermediate in catalysis.

This sequence belongs to the TrhO family.

It carries out the reaction uridine(34) in tRNA + AH2 + O2 = 5-hydroxyuridine(34) in tRNA + A + H2O. Functionally, catalyzes oxygen-dependent 5-hydroxyuridine (ho5U) modification at position 34 in tRNAs. The protein is tRNA uridine(34) hydroxylase of Brucella suis (strain ATCC 23445 / NCTC 10510).